Reading from the N-terminus, the 190-residue chain is Elongation factor P (190 aa).

Belongs to the elongation factor P family.

The protein localises to the cytoplasm. The protein operates within protein biosynthesis; polypeptide chain elongation. In terms of biological role, involved in peptide bond synthesis. Stimulates efficient translation and peptide-bond synthesis on native or reconstituted 70S ribosomes in vitro. Probably functions indirectly by altering the affinity of the ribosome for aminoacyl-tRNA, thus increasing their reactivity as acceptors for peptidyl transferase. The sequence is that of Elongation factor P from Amoebophilus asiaticus (strain 5a2).